The primary structure comprises 147 residues: Transthyretin (147 aa).

Positions 1-20 are cleaved as a signal peptide; sequence MASHRLLLLCLAGLVFVSEA. A Sulfocysteine modification is found at Cys-30. Lys-35 contributes to the L-thyroxine binding site. Ser-72 carries the post-translational modification Phosphoserine. Glu-74 is an L-thyroxine binding site. Residue Asn-118 is glycosylated (N-linked (GlcNAc...) asparagine). Ser-137 is a binding site for L-thyroxine.

Belongs to the transthyretin family. In terms of assembly, homotetramer. Dimer of dimers. In the homotetramer, subunits assemble around a central channel that can accommodate two ligand molecules. Interacts with RBP4. In terms of processing, sulfonation of the reactive cysteine Cys-30 enhances the stability of the native conformation of TTR, avoiding misassembly of the protein leading to amyloid formation.

It is found in the secreted. Functionally, thyroid hormone-binding protein. Probably transports thyroxine from the bloodstream to the brain. This Macaca fascicularis (Crab-eating macaque) protein is Transthyretin (TTR).